A 211-amino-acid polypeptide reads, in one-letter code: SOSS complex subunit B2 (211 aa).

Residues 27–97 constitute a DNA-binding region (OB); sequence IVLEIGRVTK…TLYTGRGGDL (71 aa). A disordered region spans residues 125 to 211; sequence NQQNKTSKEQ…GRDPRRASKR (87 aa). The span at 136-157 shows a compositional bias: polar residues; sequence GNSPPNQNAGNGTVPVFSNNNA. The span at 179 to 195 shows a compositional bias: pro residues; sequence NGPPPVTAGGTPAPPKP.

It belongs to the SOSS-B family. SOSS-B2 subfamily. Component of the SOSS complex, composed of soss-b (soss-b1/nabp2 or soss-b2/nabp1), soss-a/ints3 and soss-c/inip. SOSS complexes containing soss-b1/nabp2 are more abundant than complexes containing soss-b2/nabp1.

Its subcellular location is the nucleus. In terms of biological role, component of the SOSS complex, a multiprotein complex that functions downstream of the MRN complex to promote DNA repair and G2/M checkpoint. In the SOSS complex, acts as a sensor of single-stranded DNA that binds to single-stranded DNA. The SOSS complex associates with DNA lesions and influences diverse endpoints in the cellular DNA damage response including cell-cycle checkpoint activation, recombinational repair and maintenance of genomic stability. Required for efficient homologous recombination-dependent repair of double-strand breaks (DSBs). The protein is SOSS complex subunit B2 (nabp1) of Danio rerio (Zebrafish).